The following is a 662-amino-acid chain: Probable conjugal transfer protein TrbE part 2 (662 aa).

307–314 (GPTGSGKS) is an ATP binding site.

Belongs to the TrbE/VirB4 family.

The sequence is that of Probable conjugal transfer protein TrbE part 2 (trbEB) from Sinorhizobium fredii (strain NBRC 101917 / NGR234).